A 60-amino-acid chain; its full sequence is Large ribosomal subunit protein uL30 (60 aa).

This sequence belongs to the universal ribosomal protein uL30 family. As to quaternary structure, part of the 50S ribosomal subunit.

This chain is Large ribosomal subunit protein uL30, found in Verminephrobacter eiseniae (strain EF01-2).